The chain runs to 205 residues: Protein GrpE (205 aa).

Positions 1-40 (MSRKLHEEELTPEGMDAAQNADPAGDPVSENEGALPAAEP) are disordered.

Belongs to the GrpE family. In terms of assembly, homodimer.

The protein localises to the cytoplasm. Participates actively in the response to hyperosmotic and heat shock by preventing the aggregation of stress-denatured proteins, in association with DnaK and GrpE. It is the nucleotide exchange factor for DnaK and may function as a thermosensor. Unfolded proteins bind initially to DnaJ; upon interaction with the DnaJ-bound protein, DnaK hydrolyzes its bound ATP, resulting in the formation of a stable complex. GrpE releases ADP from DnaK; ATP binding to DnaK triggers the release of the substrate protein, thus completing the reaction cycle. Several rounds of ATP-dependent interactions between DnaJ, DnaK and GrpE are required for fully efficient folding. The polypeptide is Protein GrpE (Acidobacterium capsulatum (strain ATCC 51196 / DSM 11244 / BCRC 80197 / JCM 7670 / NBRC 15755 / NCIMB 13165 / 161)).